The primary structure comprises 633 residues: Chaperone protein HtpG (633 aa).

The interval 1-344 (MSLQPQAETL…SNDLPLNISR (344 aa)) is a; substrate-binding. Residues 345 to 560 (ELLQSNEVIN…ENEMSGHLQR (216 aa)) form a b region. The segment at 561 to 633 (LLIQTGQDFM…KGLNELLLDS (73 aa)) is c.

The protein belongs to the heat shock protein 90 family. In terms of assembly, homodimer.

Its subcellular location is the cytoplasm. In terms of biological role, molecular chaperone. Has ATPase activity. This is Chaperone protein HtpG from Coxiella burnetii (strain RSA 493 / Nine Mile phase I).